Consider the following 82-residue polypeptide: uncharacterized protein (82 aa).

A run of 2 helical transmembrane segments spans residues 8-28 (LTTA…LPAP) and 50-70 (LYTL…YFVL).

It is found in the cell membrane. This is an uncharacterized protein from Escherichia coli (strain K12).